The chain runs to 479 residues: FAD-dependent monooxygenase atmM (479 aa).

A helical membrane pass occupies residues 10 to 30 (IIVGGSVAGLTLAHCLQRAGI). FAD contacts are provided by E36, G50, R109, D309, and A322. Residues 445 to 465 (WILVLLVIVVSFGLHSPELVI) traverse the membrane as a helical segment.

The protein belongs to the paxM FAD-dependent monooxygenase family. FAD serves as cofactor.

It is found in the membrane. The protein operates within secondary metabolite biosynthesis. Functionally, FAD-dependent monooxygenase; part of the ATM1 gene cluster that mediates the biosynthesis of aflatrem, a tremorgenic mycotoxin with acute neurotoxic effects. Synthesis of geranylgeranyl diphosphate (GGPP) by AtmG (a GGPP synthase) precedes condensation of GGPP with indole 3-glycerol phosphate, followed by epoxidation and cyclization by AtmM (a FAD-dependent monooxygenase) and AtmC (a prenyltransferase) to produce paspaline. AtmB is also essential for paspaline production, but its exact role has not been identified yet. AtmP, a cytochrome P450 monooxygenase, subsequently converts paspaline to 13-desoxypaxilline via PC-M6 by removal of the C-30 methyl group and oxidation at C-10. AtmQ, a cytochrome P450 monooxygenase, then catalyzes the oxidation of 13-desoxypaxilline, first at C-7 to produce paspalicine and then at C-13 to form paspalinine. Finally, AtmD prenylates paspalinine to form aflatrem. This Aspergillus flavus protein is FAD-dependent monooxygenase atmM.